The following is a 141-amino-acid chain: 15 kDa lipoprotein (141 aa).

The signal sequence occupies residues methionine 1 to alanine 17. Cysteine 18 carries the N-palmitoyl cysteine lipid modification. A lipid anchor (S-diacylglycerol cysteine) is attached at cysteine 18.

The protein resides in the cell membrane. The chain is 15 kDa lipoprotein (tpp15) from Treponema pallidum (strain Nichols).